A 397-amino-acid chain; its full sequence is tRNA-specific 2-thiouridylase MnmA (397 aa).

ATP-binding positions include 19 to 26 and L45; that span reads AMSGGVDS. The Nucleophile role is filled by C113. An intrachain disulfide couples C113 to C210. G137 is a binding site for ATP. The tract at residues 160 to 162 is interaction with tRNA; it reads RDQ. The active-site Cysteine persulfide intermediate is the C210.

It belongs to the MnmA/TRMU family.

The protein resides in the cytoplasm. The catalysed reaction is S-sulfanyl-L-cysteinyl-[protein] + uridine(34) in tRNA + AH2 + ATP = 2-thiouridine(34) in tRNA + L-cysteinyl-[protein] + A + AMP + diphosphate + H(+). Catalyzes the 2-thiolation of uridine at the wobble position (U34) of tRNA, leading to the formation of s(2)U34. In Bradyrhizobium sp. (strain ORS 278), this protein is tRNA-specific 2-thiouridylase MnmA.